The sequence spans 221 residues: Abscisic acid receptor PYL1 (221 aa).

Residues 1–11 (MANSESSSSPV) are compositionally biased toward low complexity. Residues 1-22 (MANSESSSSPVNEEENSQRIST) form a disordered region. The residue at position 2 (alanine 2) is an N-acetylalanine. The START-like stretch occupies residues 50 to 206 (YQLGNGRCSS…NLQKLASITE (157 aa)). Abscisate-binding positions include lysine 86, 116 to 121 (ANTSRE), 143 to 149 (RLRNYKS), and glutamate 171. The short motif at 112–116 (SGLPA) is the Gate loop element. Residues 142-144 (HRL) carry the Latch loop motif.

It belongs to the PYR/PYL/RCAR abscisic acid intracellular receptor family. As to quaternary structure, homodimer. Binds ABA on one subunit only. Interacts with HAB1, ABI1 and ABI2, and possibly with other PP2Cs. Binds to CARs protein in an ABA-independent manner, both at the plasma membrane and in the nucleus. Interacts directly with CAR1 and CAR4.

It localises to the cytoplasm. It is found in the nucleus. The protein resides in the cell membrane. Its function is as follows. Receptor for abscisic acid (ABA) required for ABA-mediated responses such as stomatal closure and germination inhibition. Inhibits the activity of group-A protein phosphatases type 2C (PP2Cs) when activated by ABA. Can be activated by both (-)-ABA and (+)-ABA. In Arabidopsis thaliana (Mouse-ear cress), this protein is Abscisic acid receptor PYL1 (PYL1).